The primary structure comprises 728 residues: Leucine-rich repeat and calponin homology domain-containing protein 1 (728 aa).

The span at 24–36 (HHPHHHHHHHQHH) shows a compositional bias: basic residues. Residues 24–57 (HHPHHHHHHHQHHGGTGAPGGAGGGGGGSGGFNL) are disordered. Gly residues predominate over residues 37–54 (GGTGAPGGAGGGGGGSGG). 9 LRR repeats span residues 98 to 119 (DTVQ…LCHF), 121 to 143 (SLEI…VNLQ), 144 to 166 (MLTY…CGLP), 167 to 187 (LKVL…IGQL), 189 to 210 (QLME…IGQL), 212 to 234 (SLRE…VDLS), 235 to 255 (LVKF…FREM), 257 to 278 (QLQV…ICTK), and 283 to 304 (IFKY…YLHT). Positions 311–322 (HQHVEDGKKDSD) are enriched in basic and acidic residues. The disordered stretch occupies residues 311–348 (HQHVEDGKKDSDSGVGSDNGDKRLSATEPSDEDTVSLN). Residue Ser-370 is modified to Phosphoserine. A disordered region spans residues 377–398 (HQEFQPEPSLLGDSTNSGEERD). Ser-409 carries the post-translational modification Phosphoserine. Positions 516 to 525 (LQSNGSQYSP) are enriched in polar residues. Residues 516 to 547 (LQSNGSQYSPNEIRENSPAVSPTTNSTAPFGL) are disordered. Phosphoserine occurs at positions 532 and 536. A compositionally biased stretch (polar residues) spans 533 to 543 (PAVSPTTNSTA). The residue at position 568 (Thr-568) is a Phosphothreonine. The Calponin-homology (CH) domain maps to 576–692 (MREEKELVEQ…TLLALGEKAP (117 aa)).

As to quaternary structure, interacts (via LRR repeats) with unphosphorylated DOCK8 (via DHR-2 domain); the interaction prevents the interaction between DOCK8 and CDC42.

The protein localises to the cytoplasm. In terms of biological role, acts as a negative regulator of GTPase CDC42 by sequestering CDC42-guanine exchange factor DOCK8. Probably by preventing CDC42 activation, negatively regulates CD4(+) T-cell migration. This chain is Leucine-rich repeat and calponin homology domain-containing protein 1 (LRCH1), found in Homo sapiens (Human).